Here is a 572-residue protein sequence, read N- to C-terminus: Proline dehydrogenase 1, mitochondrial (572 aa).

The segment covering 105–124 has biased composition (low complexity); that stretch reads NHSNQTNNVNNKNYNNNNNN. Positions 105–140 are disordered; the sequence is NHSNQTNNVNNKNYNNNNNNFEKDDKFGPPNNQNNN.

It belongs to the proline oxidase family. Requires FAD as cofactor.

It is found in the mitochondrion matrix. The enzyme catalyses L-proline + a quinone = (S)-1-pyrroline-5-carboxylate + a quinol + H(+). It functions in the pathway amino-acid degradation; L-proline degradation into L-glutamate; L-glutamate from L-proline: step 1/2. Converts proline to delta-1-pyrroline-5-carboxylate. This is Proline dehydrogenase 1, mitochondrial (prodh) from Dictyostelium discoideum (Social amoeba).